A 296-amino-acid chain; its full sequence is Nucleotide-binding protein SPT_1506 (296 aa).

13 to 20 (GMSGAGKT) is an ATP binding site. 63 to 66 (DMRS) provides a ligand contact to GTP.

The protein belongs to the RapZ-like family.

In terms of biological role, displays ATPase and GTPase activities. This chain is Nucleotide-binding protein SPT_1506, found in Streptococcus pneumoniae (strain Taiwan19F-14).